Here is a 219-residue protein sequence, read N- to C-terminus: MCPARSLLLVATLVLLDHLSLARNLPVATPDPGMFPCLHHSQNLLRAVSNMLQKARQTLEFYPCTSEEIDHEDITKDKTSTVEACLPLELTKNESCLNSRETSFITNGSCLASRKTSFMMALCLSSIYEDLKMYQVEFKTMNAKLLMDPKRQIFLDQNMLAVIDELMQALNFNSETVPQKSSLEEPDFYKTKIKLCILLHAFRIRAVTIDRVMSYLNAS.

The N-terminal stretch at Met-1–Ala-22 is a signal peptide. Cystine bridges form between Cys-37–Cys-110, Cys-64–Cys-196, and Cys-85–Cys-123. N-linked (GlcNAc...) asparagine glycosylation is found at Asn-93 and Asn-107.

It belongs to the IL-6 superfamily. As to quaternary structure, heterodimer with IL12B; disulfide-linked. This heterodimer is known as interleukin IL-12. Heterodimer with EBI3/IL27B; not disulfide-linked. This heterodimer is known as interleukin IL-35. Interacts with NBR1; this interaction promotes IL-12 secretion.

It localises to the secreted. Functionally, heterodimerizes with IL12B to form the IL-12 cytokine or with EBI3/IL27B to form the IL-35 cytokine. IL-12 is primarily produced by professional antigen-presenting cells (APCs) such as B-cells and dendritic cells (DCs) as well as macrophages and granulocytes and regulates T-cell and natural killer-cell responses, induces the production of interferon-gamma (IFN-gamma), favors the differentiation of T-helper 1 (Th1) cells and is an important link between innate resistance and adaptive immunity. Mechanistically, exerts its biological effects through a receptor composed of IL12R1 and IL12R2 subunits. Binding to the receptor results in the rapid tyrosine phosphorylation of a number of cellular substrates including the JAK family kinases TYK2 and JAK2. In turn, recruited STAT4 gets phosphorylated and translocates to the nucleus where it regulates cytokine/growth factor responsive genes. As part of IL-35, plays essential roles in maintaining the immune homeostasis of the liver microenvironment and also functions as an immune-suppressive cytokine. Mediates biological events through unconventional receptors composed of IL12RB2 and gp130/IL6ST heterodimers or homodimers. Signaling requires the transcription factors STAT1 and STAT4, which form a unique heterodimer that binds to distinct DNA sites. The sequence is that of Interleukin-12 subunit alpha (IL12A) from Homo sapiens (Human).